A 119-amino-acid polypeptide reads, in one-letter code: uncharacterized protein (119 aa).

2 helical membrane passes run Ile-52–Ile-72 and Val-88–Ile-108.

The protein localises to the membrane. This is an uncharacterized protein from Dictyostelium discoideum (Social amoeba).